A 117-amino-acid polypeptide reads, in one-letter code: Pancreatic progenitor cell differentiation and proliferation factor A (117 aa).

The tract at residues 22 to 46 (GSTSSNSSCSSSEYTGEVIPHPPGL) is disordered. Residues 23–33 (STSSNSSCSSS) show a composition bias toward low complexity.

The protein belongs to the PPDPF family. Expressed exclusively in the exocrine cells during pancreas development.

Its function is as follows. Probable regulator of exocrine pancreas development. This chain is Pancreatic progenitor cell differentiation and proliferation factor A (ppdpfa), found in Danio rerio (Zebrafish).